Reading from the N-terminus, the 321-residue chain is Glucokinase (321 aa).

Residue 8-13 participates in ATP binding; it reads GDVGGT.

The protein belongs to the bacterial glucokinase family.

The protein localises to the cytoplasm. It carries out the reaction D-glucose + ATP = D-glucose 6-phosphate + ADP + H(+). The chain is Glucokinase from Tolumonas auensis (strain DSM 9187 / NBRC 110442 / TA 4).